The chain runs to 367 residues: Putative F-box/kelch-repeat protein At4g39600 (367 aa).

Positions 11-57 (ATSNPSLPEDLVVSCLARVSRLYYPTLSLVSKSFRSLIASPDLYKTR) constitute an F-box domain. Kelch repeat units lie at residues 127-171 (HLYA…LDGK) and 172-216 (MYLA…EGKI).

The sequence is that of Putative F-box/kelch-repeat protein At4g39600 from Arabidopsis thaliana (Mouse-ear cress).